Here is a 229-residue protein sequence, read N- to C-terminus: Large ribosomal subunit protein uL1 (229 aa).

It belongs to the universal ribosomal protein uL1 family. Part of the 50S ribosomal subunit.

In terms of biological role, binds directly to 23S rRNA. The L1 stalk is quite mobile in the ribosome, and is involved in E site tRNA release. Functionally, protein L1 is also a translational repressor protein, it controls the translation of the L11 operon by binding to its mRNA. The protein is Large ribosomal subunit protein uL1 of Chlorobium chlorochromatii (strain CaD3).